The following is a 355-amino-acid chain: Inositol polyphosphate multikinase (355 aa).

An N-acetylmethionine modification is found at M1. K31 contributes to the ATP binding site. Position 97 is a phosphoserine (S97). ATP is bound by residues 118 to 120 and D131; that span reads ENL. 127–135 contributes to the substrate binding site; sequence PNILDIKLG. Ca(2+) contacts are provided by E271 and N274. Positions 284–304 are enriched in acidic residues; it reads FIDDDDDDDDNDDDDDDDAEG. A disordered region spans residues 284–317; that stretch reads FIDDDDDDDDNDDDDDDDAEGSSEGPKDKKTTGS. Residue D325 coordinates ATP. Residue G334 coordinates Ca(2+).

This sequence belongs to the inositol phosphokinase (IPK) family. Interacts with ARG80 and MCM1. Requires Ca(2+) as cofactor.

It localises to the nucleus. The catalysed reaction is 1D-myo-inositol 1,4,5-trisphosphate + 2 ATP = 1D-myo-inositol 1,3,4,5,6-pentakisphosphate + 2 ADP + 2 H(+). It catalyses the reaction 1D-myo-inositol 1,4,5-trisphosphate + ATP = 1D-myo-inositol 1,4,5,6-tetrakisphosphate + ADP + H(+). The enzyme catalyses 1D-myo-inositol 1,4,5-trisphosphate + ATP = 1D-myo-inositol 1,3,4,5-tetrakisphosphate + ADP + H(+). It carries out the reaction 1D-myo-inositol 1,4,5,6-tetrakisphosphate + ATP = 1D-myo-inositol 1,3,4,5,6-pentakisphosphate + ADP + H(+). The catalysed reaction is a 1,2-diacyl-sn-glycero-3-phospho-(1D-myo-inositol-4,5-bisphosphate) + ATP = a 1,2-diacyl-sn-glycero-3-phospho-(1D-myo-inositol-3,4,5-trisphosphate) + ADP + H(+). Inositol phosphate kinase with both monophosphoinositol and diphosphoinositol polyphosphate synthase activities. Able to phosphorylate inositol 1,4,5-trisphosphate (Ins(1,4,5)P3) on both the carbon-3 and carbon-6 positions to synthesize inositol 1,3,4,5-tetrakisphosphate (Ins(1,3,4,5)P4) and inositol 1,4,5,6-tetrakisphosphate (Ins(1,4,5,6)P4), and then to subsequently phosphorylate and convert either isomer of InsP4 to inositol 1,3,4,5,6-pentakisphosphate (Ins(1,3,4,5,6)P5). Its predominant in vivo catalytic function is to convert Ins(1,4,5)P3 to Ins(1,4,5,6)P4 to Ins(1,3,4,5,6)P5 via 6- and 3-kinase activities. It can also use Ins(1,3,4,5,6)P5 as a substrate and act as a diphosphoinositol polyphosphate synthase to generate two different isomers of PP-InsP4. Also has a role in transcription regulation. Forms a complex with ARG80, ARG81 and MCM1 (ArgR-MCM1), which coordinates the expression of arginine anabolic and catabolic genes in response to arginine. Recruits ARG80 and MCM21 to stabilize them. Neither the kinase activity nor inositol phosphates are required for the formation of ArgR-MCM1 transcriptional complexes on DNA promoter elements and the control of arginine metabolism. In contrast, only the catalytic activity is required for PHO gene repression by phosphate and for NCR gene activation in response to nitrogen availability, indicating a role for inositol pyrophosphates in these controls. Inositol polyphosphates may be involved in the regulation of chromatin remodeling of transcription. Regulates nuclear mRNA export via inositol phosphate metabolism. Also has lipid kinase activity, transforming the lipid inositol phosphatidylinositol 4,5-bisphosphate (PI(4,5)P2) into phosphatidylinositol 3,4,5-trisphosphate (PI(3,4,5)P3) in the nucleus. Its kinase activity is necessary for the propagation of most [PSI+] prion variants. This Saccharomyces cerevisiae (strain ATCC 204508 / S288c) (Baker's yeast) protein is Inositol polyphosphate multikinase (ARG82).